The following is a 151-amino-acid chain: Ribosome maturation factor RimP (151 aa).

Belongs to the RimP family.

It is found in the cytoplasm. In terms of biological role, required for maturation of 30S ribosomal subunits. This chain is Ribosome maturation factor RimP, found in Vibrio campbellii (strain ATCC BAA-1116).